The chain runs to 574 residues: ATP-grasp enzyme fsqD (574 aa).

An ATP-grasp domain is found at 234–462 (NKFLTSKYVG…YWGLAAVLGV (229 aa)). Residue 263–318 (ALPYPLIVKPCDGWSSEGVSRVESPDAFPAAVKSIDTSRHGTEFVMEPYCDGPEVD) participates in ATP binding. Mg(2+) contacts are provided by E394, E431, and N433. E394, E431, and N433 together coordinate Mn(2+).

Mg(2+) serves as cofactor. The cofactor is Mn(2+).

It participates in secondary metabolite biosynthesis. In terms of biological role, ATP-grasp enzyme; part of the gene cluster that mediates the biosynthesis of the isoquinoline alkaloids fumisoquin A, fumisoquin B and fumisoquin C; as well as small amounts of fumipyrrole as a shunt metabolite. The products of the cluster lead to a brown coloration and are important for growth and conidiation. The nonribosomal peptide synthetase-like protein fsqF, which lacks a canonical condensation domain, is required for addition of a serine-derived dehydroalanine moiety to activated tyrosine but is not essential for the subsequent steps leading to isoquinoline formation. A different enzyme, most likely the ATP-grasp enzyme fsqD, is responsible for activation of tyrosine. Three additional enzymes encoded by the fsq cluster, the N-methyltransferase fsqC, the phenol 2-monooxygenase fsqG and the FAD-dependent oxidase fsqB, catalyze the formation of the isoquinoline ring system in the fumisoquins. FsqB converts the fspF thiolation domain-bound (2S,4S,5S)-2-amino-6-(3,4-dihydroxyphenyl)-4-hydroxy-5-(methylamino)hexanoyl into isoquinoline. The cyclization most likely proceeds via a two-step mechanism, beginning with FAD-dependent oxidation of the methyl group to an iminium species followed by electrophilic attack on the deprotonated phenol. The chain is ATP-grasp enzyme fsqD from Aspergillus fumigatus (strain ATCC MYA-4609 / CBS 101355 / FGSC A1100 / Af293) (Neosartorya fumigata).